The sequence spans 545 residues: Serine/threonine-protein kinase PAK 1 (545 aa).

Residues 1 to 75 (MSNNGVDIQD…KKREKERPEI (75 aa)) form a disordered region. Ser2 bears the N-acetylserine mark. Ser21 carries the phosphoserine; by PKB and autocatalysis modification. The residue at position 57 (Ser57) is a Phosphoserine; by autocatalysis. The segment at 70 to 140 (KERPEISLPS…YNSKKTSNSK (71 aa)) is autoregulatory region. Positions 75–88 (ISLPSDFEHTIHVG) constitute a CRIB domain. The GTPase-binding stretch occupies residues 75–105 (ISLPSDFEHTIHVGFDAVTGEFTGMPEQWAR). Phosphothreonine; by OXSR1 is present on Thr84. At Ser115 the chain carries Phosphoserine. 2 positions are modified to phosphotyrosine: Tyr131 and Tyr142. Ser144 and Ser149 each carry phosphoserine; by autocatalysis. The tract at residues 150–198 (AEDYNSSNTLNVKTVSETPAVPPVSEDDEDDDDDATPPPVIAPRPEHTK) is disordered. The segment covering 152–166 (DYNSSNTLNVKTVSE) has biased composition (polar residues). Tyr153 bears the Phosphotyrosine; by JAK2 mark. Position 174 is a phosphoserine (Ser174). Acidic residues predominate over residues 174-184 (SEDDEDDDDDA). Thr185 carries the phosphothreonine modification. Ser199 is modified (phosphoserine; by autocatalysis). Tyr201 is subject to Phosphotyrosine; by JAK2. A Phosphoserine; by autocatalysis modification is found at Ser204. The disordered stretch occupies residues 210–250 (PVTPTRDVATSPISPTENNTTPPDALTRNTEKQKKKPKMSD). Phosphothreonine occurs at positions 212 and 219. Phosphoserine is present on residues Ser220 and Ser223. Residues 220–231 (SPISPTENNTTP) show a composition bias toward polar residues. Phosphothreonine occurs at positions 225, 229, and 230. Positions 270–521 (YTPFEKIGQG…AKELLQHQFL (252 aa)) constitute a Protein kinase domain. ATP is bound at residue 276–284 (IGQGASGTV). Position 285 is a phosphotyrosine; by JAK2 (Tyr285). Lys299 is an ATP binding site. Asp389 serves as the catalytic Proton acceptor. Thr423 is modified (phosphothreonine; by autocatalysis, BRSK2 and PDPK1).

This sequence belongs to the protein kinase superfamily. STE Ser/Thr protein kinase family. STE20 subfamily. Homodimer in its autoinhibited state. Active as monomer. Interacts with GIT1. Component of cytoplasmic complexes, which also contains PXN, ARHGEF7 and GIT1. Interacts with NISCH. Interacts with DVL1; mediates the formation of a DVL1, MUSK and PAK1 ternary complex involved in AChR clustering. Binds to the caspase-cleaved p110 isoform of CDC2L1 and CDC2L2, p110C, but not the full-length proteins. Interacts with ARHGEF7. Interacts tightly with GTP-bound but not GDP-bound CDC42/P21 and RAC1. Interacts with SCRIB. Interacts with PDPK1. Interacts (via kinase domain) with RAF1. Interacts with NCK1 and NCK2. Interacts with TBCB. Interacts with BRSK2. Interacts with SNAI1. Interacts with CIB1 (via N-terminal region); the interaction is direct, promotes PAK1 activity and occurs in a calcium-dependent manner. Interacts with INPP5K. Interacts with gamma-tubulin. Interacts with RHOU; the interaction promotes PAK1 activation. Requires Mg(2+) as cofactor. In terms of processing, autophosphorylated in trans, meaning that in a dimer, one kinase molecule phosphorylates the other one. Activated by autophosphorylation at Thr-423 in response to a conformation change, triggered by interaction with GTP-bound CDC42 or RAC1. Activated by phosphorylation at Thr-423 by BRSK2 and by PDPK1. Phosphorylated by JAK2 in response to PRL; this increases PAK1 kinase activity. Phosphorylated at Ser-21 by PKB/AKT; this reduces interaction with NCK1 and association with focal adhesion sites. Upon DNA damage, phosphorylated at Thr-212 and translocates to the nucleoplasm. Phosphorylated at tyrosine residues, which can be enhanced by NTN1.

The protein localises to the cytoplasm. It is found in the cell junction. The protein resides in the focal adhesion. Its subcellular location is the cell projection. It localises to the lamellipodium. The protein localises to the cell membrane. It is found in the ruffle membrane. The protein resides in the invadopodium. Its subcellular location is the nucleus. It localises to the nucleoplasm. The protein localises to the chromosome. It is found in the cytoskeleton. The protein resides in the microtubule organizing center. Its subcellular location is the centrosome. It catalyses the reaction L-seryl-[protein] + ATP = O-phospho-L-seryl-[protein] + ADP + H(+). The enzyme catalyses L-threonyl-[protein] + ATP = O-phospho-L-threonyl-[protein] + ADP + H(+). Phosphorylation of Thr-84 by OXSR1 inhibits activation. Activated by binding small G proteins. Binding of GTP-bound CDC42 or RAC1 to the autoregulatory region releases monomers from the autoinhibited dimer, and enables activation by phosphorylation of Thr-423. Protein kinase involved in intracellular signaling pathways downstream of integrins and receptor-type kinases that plays an important role in cytoskeleton dynamics, in cell adhesion, migration, proliferation, apoptosis, mitosis, and in vesicle-mediated transport processes. Can directly phosphorylate BAD and protects cells against apoptosis. Activated by interaction with CDC42 and RAC1. Functions as a GTPase effector that links the Rho-related GTPases CDC42 and RAC1 to the JNK MAP kinase pathway. Phosphorylates and activates MAP2K1, and thereby mediates activation of downstream MAP kinases. Involved in the reorganization of the actin cytoskeleton, actin stress fibers and of focal adhesion complexes. Phosphorylates the tubulin chaperone TBCB and thereby plays a role in the regulation of microtubule biogenesis and organization of the tubulin cytoskeleton. Plays a role in the regulation of insulin secretion in response to elevated glucose levels. Part of a ternary complex that contains PAK1, DVL1 and MUSK that is important for MUSK-dependent regulation of AChR clustering during the formation of the neuromuscular junction (NMJ). Activity is inhibited in cells undergoing apoptosis, potentially due to binding of CDC2L1 and CDC2L2. Phosphorylates MYL9/MLC2. Phosphorylates RAF1 at 'Ser-338' and 'Ser-339' resulting in: activation of RAF1, stimulation of RAF1 translocation to mitochondria, phosphorylation of BAD by RAF1, and RAF1 binding to BCL2. Phosphorylates SNAI1 at 'Ser-246' promoting its transcriptional repressor activity by increasing its accumulation in the nucleus. In podocytes, promotes NR3C2 nuclear localization. Required for atypical chemokine receptor ACKR2-induced phosphorylation of LIMK1 and cofilin (CFL1) and for the up-regulation of ACKR2 from endosomal compartment to cell membrane, increasing its efficiency in chemokine uptake and degradation. In synapses, seems to mediate the regulation of F-actin cluster formation performed by SHANK3, maybe through CFL1 phosphorylation and inactivation. Plays a role in RUFY3-mediated facilitating gastric cancer cells migration and invasion. In response to DNA damage, phosphorylates MORC2 which activates its ATPase activity and facilitates chromatin remodeling. In neurons, plays a crucial role in regulating GABA(A) receptor synaptic stability and hence GABAergic inhibitory synaptic transmission through its role in F-actin stabilization. In hippocampal neurons, necessary for the formation of dendritic spines and excitatory synapses; this function is dependent on kinase activity and may be exerted by the regulation of actomyosin contractility through the phosphorylation of myosin II regulatory light chain (MLC). Along with GIT1, positively regulates microtubule nucleation during interphase. Phosphorylates FXR1, promoting its localization to stress granules and activity. Phosphorylates ILK on 'Thr-173' and 'Ser-246', promoting nuclear export of ILK. The protein is Serine/threonine-protein kinase PAK 1 of Mus musculus (Mouse).